A 160-amino-acid polypeptide reads, in one-letter code: Ribosome maturation factor RimP (160 aa).

It belongs to the RimP family.

The protein resides in the cytoplasm. Functionally, required for maturation of 30S ribosomal subunits. The protein is Ribosome maturation factor RimP of Orientia tsutsugamushi (strain Boryong) (Rickettsia tsutsugamushi).